The sequence spans 305 residues: UDP-3-O-acyl-N-acetylglucosamine deacetylase (305 aa).

Positions 79, 238, and 242 each coordinate Zn(2+). H265 functions as the Proton donor in the catalytic mechanism.

This sequence belongs to the LpxC family. It depends on Zn(2+) as a cofactor.

It carries out the reaction a UDP-3-O-[(3R)-3-hydroxyacyl]-N-acetyl-alpha-D-glucosamine + H2O = a UDP-3-O-[(3R)-3-hydroxyacyl]-alpha-D-glucosamine + acetate. It functions in the pathway glycolipid biosynthesis; lipid IV(A) biosynthesis; lipid IV(A) from (3R)-3-hydroxytetradecanoyl-[acyl-carrier-protein] and UDP-N-acetyl-alpha-D-glucosamine: step 2/6. Catalyzes the hydrolysis of UDP-3-O-myristoyl-N-acetylglucosamine to form UDP-3-O-myristoylglucosamine and acetate, the committed step in lipid A biosynthesis. This is UDP-3-O-acyl-N-acetylglucosamine deacetylase from Erwinia tasmaniensis (strain DSM 17950 / CFBP 7177 / CIP 109463 / NCPPB 4357 / Et1/99).